A 194-amino-acid chain; its full sequence is Probable molybdenum cofactor guanylyltransferase (194 aa).

Residues 8-10 (LAG), Lys-20, and Asp-99 contribute to the GTP site. Asp-99 is a binding site for Mg(2+).

It belongs to the MobA family. It depends on Mg(2+) as a cofactor.

The protein resides in the cytoplasm. It carries out the reaction Mo-molybdopterin + GTP + H(+) = Mo-molybdopterin guanine dinucleotide + diphosphate. Functionally, transfers a GMP moiety from GTP to Mo-molybdopterin (Mo-MPT) cofactor (Moco or molybdenum cofactor) to form Mo-molybdopterin guanine dinucleotide (Mo-MGD) cofactor. This Synechococcus elongatus (strain ATCC 33912 / PCC 7942 / FACHB-805) (Anacystis nidulans R2) protein is Probable molybdenum cofactor guanylyltransferase.